Consider the following 2194-residue polypeptide: MAPPRGRSKRKHPSESGNSSIADSEDPSESTSSSRPRRSRLPKRYFDDGYSPPPTKKRAAQRETPSDAEEVEVKIEEISVRSTPASTPAPKSTSKARGRPKKNPTPPRRKSLKRQEEDIIYMDEDSEEEEESSDDEFMLNEDQVVQEEEEELNLTDIKIEKGLDEENKYCPWLDEDPASLPKLELPESSQDIPIPTASIMDAVEIYEILRSYHRTLRITPFTFEDFCAALISHNNSCIMAEVHMALLRNCLKSDDEEQTHYSVTETNNSVNIMIHHMDTLTYAEILRQYIEAYPFADASVRDAINVDNYPFVGYDAKLVVLLFMSYRFLYSSEFKKLVNNVGKFQNDENCRVCGKSSGRVVGCTQCEAAFHVECSHLKPFPEVLVCNICKKNSAVRGVLPPDEAVDREPLRSQPIGRDRYGRYYWFIVRRLVVQSLDETELYYYSTVPQLYQLLQKLDRTYYEKDLCDTIRLRIDEFLEQMALTVEMTSERREAALETMVKRQLIGYDFAEATTPQIYLHRDSMKRMASILRDCAQKGQVKQEVKLEEPVEGQSPVKCVQFVEDSILPESMIGIFDAKLINTFWSGGATQEELVEQFVDISDNFDAPSANLWRMGDEGNDQTFMTYYNYYSRNEMSESFLTRKKAADKKKYMASKFAQIDNFDWVVAKNRQFYGDASLHCKFIMWTLQQVIKNIPIDLMHRKWPEFAKGFDLEVSVADDYKKLVTCLLKLDCAVRKTIFMPQWWNGLGQTRLERITVDQRENFMKEQQRLKKIDADALTKDLDDSFVRVNYMKPKWPNTYILRQRGETYRNAGKGSMGGWAWVAAKYVEKWIQVPESPKLPLAVTVEEIKTESVSNRKARRLELLVSKITKKRQRSGGKSSKKPTFELTNGCYSPSCRSNPNRKCYSPMCRNGYLVSAKQAHDERKLEESGVLGEEKAWPIPEIQTFSTKRGGKSIFVLQKKILRQMIMGGGCQQVYMPGFSAGIKSNLLIWPYPAPRPTLDLCWKWQTLNARSLHAVALQLKIIWSSIKFNEFDPDDTHPDRRVVIDTPSHDERRRIIRHKEMPPYGQYERYEMEIEIIPLYDEPEEEDESWLSRNRGGSSEFSHRSSSARKKRPQRSLDNRRATAIRREWVDGVTLKVFEIKDYWKWIRAEAEKTAKRKLEATRKAQKAKEDEERRRIQQQQQRSVARIPVPMHSLIPSERNNVPYLGSQQQRRPNGNERGFLEKYNNSSSVSPQAHGYASTPPPGYHQPQPNIIRQAGYNQLPRKPTTSPFNFQSRPVATIPTTPQLRAAAGADGVVRAVMMTPGNKSTVNTNSTPYPQALNRQQYQLQRQQQQPAVRRLTNGYHFMDGTMRGGGRNPSVQMHQRLPQNRAALQRPFGESTTEMRRVTEAAIPDNDGDEQPPVIPRYDPTSNFDAQRAQQQHPQSRPVYSTPAQMIRTTQPGGVKHNVILMKASDGTQKMVLKPGQFPPGTVISTGQRVVPYRQPTAVQQRQLYTATPGTRVVRIPNANGGAPRQQDHQVMRRVVQASGPRAMEYMDDQGTPPPGQQVRYVLQGGNSGTPNVNPPKVSSRGGPRGGLTMQMVQQQQQHNPEHRRLLAGRQKQKVTTYRDFMASRGYLDTSKFMMQTKPTFLPFEFNEEEEREINEAIAREEAWMRQEEENKTSGYDSSGNPIRSITSSGDTQRAPPYVSNLLPSSNDSPDDKVIKQVLDVMFSQVCRWDRQYGWSKTHVKRARQKNDSDKMHLRKFRMNQRELLITDHMERLKKEINKRRTRMENEAEQQCGLLTPWRKARARPHRAAKPKAEVKKEVINPADITLGGDTYDYVKEQKPTESIATNVSRRRRTSANLSKSEDDRDKPESQSTAPKSKERRTSEPPASHVAFHTPGSATPHDINLSIEHCTCQKIFDASKLYIQCELCARWYHGDCVGVAEQTILGLEHWSCEECIEEQERVKDQPALYCVCQKPYDDTKFYVGCDSCQGWFHPECVGTTRAEAEQAADYNCPACTREAEGYESEASDVSGSSRVSVQLTRADYTHVFELLELLLEHRMSTPFRNPVDLNEFPDYEKFIKKPMDLSTITKKVERTEYLYLSQFVNDVNQMFENAKTYNPKGNAVFKCAETMQEVFDKKLIDVREQMTARQQMLLLATAQQQDPMSSIRKRVQSESQRTVDSLDIDSDQLLPLDANLMRLYDF.

Over residues 1–12 (MAPPRGRSKRKH) the composition is skewed to basic residues. Residues 1–137 (MAPPRGRSKR…EEEESSDDEF (137 aa)) form a disordered region. The segment covering 60–79 (AQRETPSDAEEVEVKIEEIS) has biased composition (basic and acidic residues). Residues 80–93 (VRSTPASTPAPKST) are compositionally biased toward polar residues. The span at 94 to 112 (SKARGRPKKNPTPPRRKSL) shows a compositional bias: basic residues. Acidic residues predominate over residues 118–137 (DIIYMDEDSEEEEESSDDEF). DDT domains follow at residues 196 to 256 (TASI…SDDE) and 341 to 396 (VGKF…SAVR). The PHD-type 1 zinc finger occupies 347–392 (DENCRVCGKSSGRVVGCTQCEAAFHVECSHLKPFPEVLVCNICKKN). 5 disordered regions span residues 1091 to 1122 (ESWLSRNRGGSSEFSHRSSSARKKRPQRSLDN), 1158 to 1255 (AKRK…PQPN), 1413 to 1433 (TSNFDAQRAQQQHPQSRPVYS), 1657 to 1701 (MRQE…SNDS), and 1834 to 1888 (ESIA…HTPG). Positions 1151–1187 (RAEAEKTAKRKLEATRKAQKAKEDEERRRIQQQQQRS) form a coiled coil. Positions 1158 to 1179 (AKRKLEATRKAQKAKEDEERRR) are enriched in basic and acidic residues. Positions 1665–1684 (TSGYDSSGNPIRSITSSGDT) are enriched in polar residues. Residues 1852–1861 (KSEDDRDKPE) show a composition bias toward basic and acidic residues. DDT domains follow at residues 1883–1953 (AFHT…EQER) and 1948–2014 (IEEQ…AEGY). 2 consecutive PHD-type zinc fingers follow at residues 1899-1950 (IEHC…CIEE) and 1959-2010 (ALYC…CTRE). The Bromo domain maps to 2030–2134 (QLTRADYTHV…EVFDKKLIDV (105 aa)).

It belongs to the BPTF family. In terms of assembly, part of a nucleosome remodeling factor-like (NURF-like) complex containing nurf-1 and isw-1.

It localises to the nucleus. Functionally, histone-binding component of a NURF-like (nucleosome remodeling factor-like) complex, which would catalyze ATP-dependent nucleosome sliding and facilitate transcription of chromatin. Involved in vulval cell fates. The chain is Nucleosome-remodeling factor subunit NURF301-like (nurf-1) from Caenorhabditis elegans.